Here is a 1188-residue protein sequence, read N- to C-terminus: NF-X1-type zinc finger protein NFXL1 (1188 aa).

Positions 1–15 (MSFQVRRDRSDDRSH) are enriched in basic and acidic residues. 2 disordered regions span residues 1 to 52 (MSFQ…ETLD) and 65 to 195 (QHNA…VAKE). Polar residues-rich tracts occupy residues 19-34 (HQQT…SSVV) and 168-186 (ASGT…TRPV). An RING-type; degenerate zinc finger spans residues 223–279 (CMICYDKVGRSANIWSCSSCYSIFHINCIKRWARAPTSVDLLAEKNQGDNWRCPGCQ). 9 NF-X1-type zinc fingers span residues 335–353 (CPHV…PCKA), 390–409 (CGRH…PCQV), 454–473 (CGNH…DCDL), 513–532 (CRLH…PCLV), 572–607 (CGRH…PCQK), 611–630 (CGQH…PCLE), 668–686 (CGHS…PCST), 721–751 (CGMH…TCRQ), and 760–781 (CRHT…RCEF). One can recognise an R3H domain in the interval 894–963 (PKWVLAVEER…KRFTVVHVTA (70 aa)). A disordered region spans residues 1100-1188 (SDDSWGAEDS…VVDDWEKVCE (89 aa)). Polar residues-rich tracts occupy residues 1126–1138 (AKSN…SVNR) and 1159–1169 (EESSSSKTTGK).

Belongs to the NFX1 family. As to expression, expressed in seedlings, roots, stems, leaves, buds, flowers and siliques.

It is found in the nucleus. It participates in protein modification; protein ubiquitination. Mediates E2-dependent ubiquitination. Confers resistance to osmotic stress such as high salinity. Promotes H(2)O(2) production. Negative regulator of some defense-related genes via an salicylic acid (SA)-dependent signaling pathway. Confers susceptibility to the compatible phytopathogen Pseudomonas syringae pv. tomato strain DC3000 (Pst DC3000). Mediates resistance to type A trichothecenes (phytotoxins produced by phytopathogenic fungi). In Arabidopsis thaliana (Mouse-ear cress), this protein is NF-X1-type zinc finger protein NFXL1 (NFXL1).